Reading from the N-terminus, the 416-residue chain is UDP-N-acetylmuramoylalanine--D-glutamate ligase (416 aa).

Position 104–110 (104–110 (GSNGKST)) interacts with ATP.

This sequence belongs to the MurCDEF family.

It is found in the cytoplasm. It catalyses the reaction UDP-N-acetyl-alpha-D-muramoyl-L-alanine + D-glutamate + ATP = UDP-N-acetyl-alpha-D-muramoyl-L-alanyl-D-glutamate + ADP + phosphate + H(+). It participates in cell wall biogenesis; peptidoglycan biosynthesis. Cell wall formation. Catalyzes the addition of glutamate to the nucleotide precursor UDP-N-acetylmuramoyl-L-alanine (UMA). This chain is UDP-N-acetylmuramoylalanine--D-glutamate ligase, found in Francisella tularensis subsp. mediasiatica (strain FSC147).